Reading from the N-terminus, the 102-residue chain is MIPGEIKTDSGDRELNVGRPRIKIKVANAGDRPIQVGSHYHFYEVNNALKFDREATKGYRLDITSSTAIRFEPGQEREVTLIPYQGSRTVIGFQGKVQGVLS.

This sequence belongs to the urease beta subunit family. Heterotrimer of UreA (gamma), UreB (beta) and UreC (alpha) subunits. Three heterotrimers associate to form the active enzyme.

It is found in the cytoplasm. It carries out the reaction urea + 2 H2O + H(+) = hydrogencarbonate + 2 NH4(+). It functions in the pathway nitrogen metabolism; urea degradation; CO(2) and NH(3) from urea (urease route): step 1/1. The chain is Urease subunit beta from Alteromonas mediterranea (strain DSM 17117 / CIP 110805 / LMG 28347 / Deep ecotype).